Consider the following 227-residue polypeptide: Phosphoribosylformylglycinamidine synthase subunit PurQ (227 aa).

Residues Phe-3–Val-225 enclose the Glutamine amidotransferase type-1 domain. Catalysis depends on Cys-86, which acts as the Nucleophile. Active-site residues include His-194 and Glu-196.

Part of the FGAM synthase complex composed of 1 PurL, 1 PurQ and 2 PurS subunits.

It is found in the cytoplasm. It catalyses the reaction N(2)-formyl-N(1)-(5-phospho-beta-D-ribosyl)glycinamide + L-glutamine + ATP + H2O = 2-formamido-N(1)-(5-O-phospho-beta-D-ribosyl)acetamidine + L-glutamate + ADP + phosphate + H(+). The enzyme catalyses L-glutamine + H2O = L-glutamate + NH4(+). It participates in purine metabolism; IMP biosynthesis via de novo pathway; 5-amino-1-(5-phospho-D-ribosyl)imidazole from N(2)-formyl-N(1)-(5-phospho-D-ribosyl)glycinamide: step 1/2. Part of the phosphoribosylformylglycinamidine synthase complex involved in the purines biosynthetic pathway. Catalyzes the ATP-dependent conversion of formylglycinamide ribonucleotide (FGAR) and glutamine to yield formylglycinamidine ribonucleotide (FGAM) and glutamate. The FGAM synthase complex is composed of three subunits. PurQ produces an ammonia molecule by converting glutamine to glutamate. PurL transfers the ammonia molecule to FGAR to form FGAM in an ATP-dependent manner. PurS interacts with PurQ and PurL and is thought to assist in the transfer of the ammonia molecule from PurQ to PurL. This chain is Phosphoribosylformylglycinamidine synthase subunit PurQ, found in Bacillus cereus (strain 03BB102).